Here is a 355-residue protein sequence, read N- to C-terminus: Putative testis-specific Y-encoded-like protein 3 (355 aa).

The segment at 1 to 131 (MADKRAGTPE…GEEKQEVAAE (131 aa)) is disordered. Over residues 93-128 (ASEKAEDANKEEGAIFKKEPAEEVEKQQEGEEKQEV) the composition is skewed to basic and acidic residues.

It belongs to the nucleosome assembly protein (NAP) family.

The polypeptide is Putative testis-specific Y-encoded-like protein 3 (TSPY26P) (Homo sapiens (Human)).